The primary structure comprises 384 residues: 8-amino-7-oxononanoate synthase (384 aa).

Arg21 is a binding site for substrate. Residue 108–109 (GF) coordinates pyridoxal 5'-phosphate. A substrate-binding site is contributed by His133. Positions 179, 207, and 233 each coordinate pyridoxal 5'-phosphate. Lys236 carries the N6-(pyridoxal phosphate)lysine modification. Substrate is bound at residue Thr352.

This sequence belongs to the class-II pyridoxal-phosphate-dependent aminotransferase family. BioF subfamily. In terms of assembly, homodimer. Pyridoxal 5'-phosphate serves as cofactor.

The enzyme catalyses 6-carboxyhexanoyl-[ACP] + L-alanine + H(+) = (8S)-8-amino-7-oxononanoate + holo-[ACP] + CO2. It participates in cofactor biosynthesis; biotin biosynthesis. In terms of biological role, catalyzes the decarboxylative condensation of pimeloyl-[acyl-carrier protein] and L-alanine to produce 8-amino-7-oxononanoate (AON), [acyl-carrier protein], and carbon dioxide. The polypeptide is 8-amino-7-oxononanoate synthase (Escherichia coli O157:H7).